A 52-amino-acid chain; its full sequence is Large ribosomal subunit protein eL40 (52 aa).

Zn(2+) is bound by residues Cys20, Cys23, Cys34, and Cys39.

The protein belongs to the eukaryotic ribosomal protein eL40 family. In terms of assembly, component of the large ribosomal subunit. Mature ribosomes consist of a small (40S) and a large (60S) subunit. The 40S subunit contains about 32 different proteins and 1 molecule of RNA (18S). The 60S subunit contains 45 different proteins and 3 molecules of RNA (25S, 5.8S and 5S). Zn(2+) is required as a cofactor.

It localises to the cytoplasm. In terms of biological role, component of the ribosome, a large ribonucleoprotein complex responsible for the synthesis of proteins in the cell. The small ribosomal subunit (SSU) binds messenger RNAs (mRNAs) and translates the encoded message by selecting cognate aminoacyl-transfer RNA (tRNA) molecules. The large subunit (LSU) contains the ribosomal catalytic site termed the peptidyl transferase center (PTC), which catalyzes the formation of peptide bonds, thereby polymerizing the amino acids delivered by tRNAs into a polypeptide chain. The nascent polypeptides leave the ribosome through a tunnel in the LSU and interact with protein factors that function in enzymatic processing, targeting, and the membrane insertion of nascent chains at the exit of the ribosomal tunnel. This chain is Large ribosomal subunit protein eL40, found in Candida albicans (strain SC5314 / ATCC MYA-2876) (Yeast).